A 671-amino-acid chain; its full sequence is DNA ligase (671 aa).

NAD(+) contacts are provided by residues 32–36 (DAEYD), 81–82 (SL), and Glu-113. Catalysis depends on Lys-115, which acts as the N6-AMP-lysine intermediate. NAD(+) contacts are provided by Arg-136, Glu-173, Lys-290, and Lys-314. Zn(2+) contacts are provided by Cys-408, Cys-411, Cys-426, and Cys-432. In terms of domain architecture, BRCT spans 593 to 671 (EIDSPFAGKT…EAEMLRLLGS (79 aa)).

The protein belongs to the NAD-dependent DNA ligase family. LigA subfamily. Requires Mg(2+) as cofactor. Mn(2+) serves as cofactor.

The enzyme catalyses NAD(+) + (deoxyribonucleotide)n-3'-hydroxyl + 5'-phospho-(deoxyribonucleotide)m = (deoxyribonucleotide)n+m + AMP + beta-nicotinamide D-nucleotide.. Its function is as follows. DNA ligase that catalyzes the formation of phosphodiester linkages between 5'-phosphoryl and 3'-hydroxyl groups in double-stranded DNA using NAD as a coenzyme and as the energy source for the reaction. It is essential for DNA replication and repair of damaged DNA. The sequence is that of DNA ligase from Escherichia coli O157:H7.